We begin with the raw amino-acid sequence, 76 residues long: Esculentin-2MT3 (76 aa).

Positions 1–22 (MFTLKKSMLLLFFLGTISLSLC) are cleaved as a signal peptide. The propeptide at 23–37 (EEERNADEDDGEKEV) is removed in mature form. The cysteines at positions 70 and 76 are disulfide-linked.

Belongs to the frog skin active peptide (FSAP) family. Esculentin subfamily. Expressed by the skin glands.

It localises to the secreted. Its function is as follows. Antimicrobial peptide. The sequence is that of Esculentin-2MT3 from Amolops mantzorum (Sichuan torrent frog).